The sequence spans 425 residues: Serine--tRNA ligase (425 aa).

231 to 233 (TAE) contributes to the L-serine binding site. 262 to 264 (RSE) contributes to the ATP binding site. Glu285 is a binding site for L-serine. Position 349–352 (349–352 (EISS)) interacts with ATP. An L-serine-binding site is contributed by Ser385.

It belongs to the class-II aminoacyl-tRNA synthetase family. Type-1 seryl-tRNA synthetase subfamily. In terms of assembly, homodimer. The tRNA molecule binds across the dimer.

Its subcellular location is the cytoplasm. The catalysed reaction is tRNA(Ser) + L-serine + ATP = L-seryl-tRNA(Ser) + AMP + diphosphate + H(+). It catalyses the reaction tRNA(Sec) + L-serine + ATP = L-seryl-tRNA(Sec) + AMP + diphosphate + H(+). It participates in aminoacyl-tRNA biosynthesis; selenocysteinyl-tRNA(Sec) biosynthesis; L-seryl-tRNA(Sec) from L-serine and tRNA(Sec): step 1/1. Its function is as follows. Catalyzes the attachment of serine to tRNA(Ser). Is also able to aminoacylate tRNA(Sec) with serine, to form the misacylated tRNA L-seryl-tRNA(Sec), which will be further converted into selenocysteinyl-tRNA(Sec). The protein is Serine--tRNA ligase of Bartonella tribocorum (strain CIP 105476 / IBS 506).